A 307-amino-acid polypeptide reads, in one-letter code: Serine/threonine-protein phosphatase 4 catalytic subunit (307 aa).

Mn(2+) is bound by residues aspartate 54, histidine 56, aspartate 82, and asparagine 114. Histidine 115 functions as the Proton donor in the catalytic mechanism. Mn(2+)-binding residues include histidine 164 and histidine 238. Position 307 is a leucine methyl ester (leucine 307).

The protein belongs to the PPP phosphatase family. PP-4 (PP-X) subfamily. Serine/threonine-protein phosphatase 4 (PP4) occurs in different assemblies of the catalytic and one or more regulatory subunits. The cofactor is Mn(2+).

It is found in the cytoplasm. The protein localises to the nucleus. The protein resides in the cytoskeleton. Its subcellular location is the microtubule organizing center. It localises to the centrosome. The enzyme catalyses O-phospho-L-seryl-[protein] + H2O = L-seryl-[protein] + phosphate. It carries out the reaction O-phospho-L-threonyl-[protein] + H2O = L-threonyl-[protein] + phosphate. In terms of biological role, protein phosphatase that regulates many processes such as microtubule organization at centrosomes. In Xenopus laevis (African clawed frog), this protein is Serine/threonine-protein phosphatase 4 catalytic subunit (ppp4c).